A 971-amino-acid polypeptide reads, in one-letter code: Isoleucine--tRNA ligase (971 aa).

The short motif at 64–74 (PYANGHIHIGH) is the 'HIGH' region element. An L-isoleucyl-5'-AMP-binding site is contributed by glutamate 602. The 'KMSKS' region signature appears at 643–647 (KMSKS). An ATP-binding site is contributed by lysine 646.

It belongs to the class-I aminoacyl-tRNA synthetase family. IleS type 1 subfamily. As to quaternary structure, monomer.

Its subcellular location is the cytoplasm. It carries out the reaction tRNA(Ile) + L-isoleucine + ATP = L-isoleucyl-tRNA(Ile) + AMP + diphosphate. In terms of biological role, catalyzes the attachment of isoleucine to tRNA(Ile). As IleRS can inadvertently accommodate and process structurally similar amino acids such as valine, to avoid such errors it has two additional distinct tRNA(Ile)-dependent editing activities. One activity is designated as 'pretransfer' editing and involves the hydrolysis of activated Val-AMP. The other activity is designated 'posttransfer' editing and involves deacylation of mischarged Val-tRNA(Ile). This is Isoleucine--tRNA ligase from Bartonella henselae (strain ATCC 49882 / DSM 28221 / CCUG 30454 / Houston 1) (Rochalimaea henselae).